The following is a 1370-amino-acid chain: Reverse gyrase 1 (1370 aa).

An RG N-terminal-type zinc finger spans residues 6–47 (AASRGVYRYLCPNCGGPNSEERLSRGLPCPRCLPRLPRKGVS). Cysteine 16, cysteine 19, cysteine 34, and cysteine 37 together coordinate Zn(2+). ATP is bound by residues glutamine 95 and 112 to 119 (APTGVGKT). A Helicase ATP-binding domain is found at 99-287 (AKRLARGDSF…RKKLLEVKRR (189 aa)). A DEAD box motif is present at residues 220-223 (DDVD). Residues 643-1370 (ELVRTALLVV…VSRVWGAGVG (728 aa)) form a topoisomerase I region. One can recognise a Toprim domain in the interval 647–825 (TALLVVESPN…DIKRLEFHEV (179 aa)). Glutamate 653 is a binding site for Mg(2+). The RG C-terminal-type zinc-finger motif lies at 744-772 (IKRCLDCGYQFVDEASRCPRCGSELIRNS). Residues cysteine 747, cysteine 750, cysteine 761, and cysteine 764 each coordinate Zn(2+). Aspartate 794 is a binding site for Mg(2+). In terms of domain architecture, Topo IA-type catalytic spans 841–1323 (DDNLVDAQVV…SVFNEISDLA (483 aa)). The active-site O-(5'-phospho-DNA)-tyrosine intermediate is the tyrosine 1028.

This sequence in the N-terminal section; belongs to the DEAD box helicase family. DDVD subfamily. The protein in the C-terminal section; belongs to the type IA topoisomerase family. As to quaternary structure, monomer. Zn(2+) serves as cofactor. Mg(2+) is required as a cofactor.

Its subcellular location is the cytoplasm. The catalysed reaction is ATP + H2O = ADP + phosphate + H(+). In terms of biological role, modifies the topological state of DNA by introducing positive supercoils in an ATP-dependent process, increasing the linking number in steps of +1. Binds to single-stranded DNA, transiently cleaves and then rejoins the ends, introducing a positive supercoil in the process. The scissile phosphodiester is attacked by the catalytic tyrosine of the enzyme, resulting in the formation of a DNA-(5'-phosphotyrosyl)-enzyme intermediate. Probably involved in rewinding DNA strands in regions of the chromosome that have opened up to allow replication, transcription, DNA repair and/or for DNA protection. In Aeropyrum pernix (strain ATCC 700893 / DSM 11879 / JCM 9820 / NBRC 100138 / K1), this protein is Reverse gyrase 1.